The sequence spans 952 residues: Disintegrin and metalloproteinase domain-containing protein adm-2 (952 aa).

Residues 1 to 672 are Extracellular-facing; sequence MTDTLDLKLS…NEAYRFRGIT (672 aa). N-linked (GlcNAc...) asparagine glycosylation is found at N125 and N301. One can recognise a Peptidase M12B domain in the interval 177–373; that stretch reads RFVELALVAD…GIDLCLFNEP (197 aa). Intrachain disulfides connect C287–C368, C330–C352, and C332–C337. Position 312 (H312) interacts with Zn(2+). E313 is an active-site residue. Zn(2+) contacts are provided by H316 and H322. Residues 379–466 enclose the Disintegrin domain; that stretch reads DAKCGNGIVE…DCPADFFVQN (88 aa). N-linked (GlcNAc...) asparagine glycosylation is present at N406. 4 cysteine pairs are disulfide-bonded: C438–C458, C624–C634, C628–C640, and C642–C651. An EGF-like domain is found at 620–652; that stretch reads VTAQCLDNCNFRGVCNNVGNCHCERGFGGIACE. Residues 673 to 693 traverse the membrane as a helical segment; it reads LSSTFLVFFCLFGIFIGGLCV. Topologically, residues 694–952 are cytoplasmic; that stretch reads YYRVKRKRNL…AAIFDQKLKK (259 aa). Disordered stretches follow at residues 778-809 and 829-938; these read IPMVTLKNPNLASPTPLLNPAEKEEQNQERAT and SFNT…EKVD. 2 stretches are compositionally biased toward basic and acidic residues: residues 798 to 809 and 849 to 873; these read AEKEEQNQERAT and PSDDVLSKLNEDLAKEKNAKFDRLN. A compositionally biased stretch (pro residues) spans 905–914; it reads QAPPPPPPAH. Residues 925–938 are compositionally biased toward basic and acidic residues; it reads KVSEDAAATEEKVD.

The cofactor is Zn(2+). Expressed in hyp7 large epidermal syncytium (punctate distribution), seam cell syncytia, anterior epidermis, neurons located in the head, tail and central body, proximal oogenic cells (levels increasing in maturing oocytes) and myoepithelial cells of the spermatheca (at protein level). Not detected in mature sperm cells.

The protein resides in the cell membrane. The protein localises to the endosome membrane. It localises to the lysosome membrane. Functionally, metalloprotease that cleaves and releases a number of molecules. Negative regulator of lrp-1 protein levels, potentially by influencing its endosomal trafficking. Involved in regulating the molting process. The polypeptide is Disintegrin and metalloproteinase domain-containing protein adm-2 (Caenorhabditis elegans).